Consider the following 425-residue polypeptide: Histidine--tRNA ligase (425 aa).

The protein belongs to the class-II aminoacyl-tRNA synthetase family. As to quaternary structure, homodimer.

The protein resides in the cytoplasm. It carries out the reaction tRNA(His) + L-histidine + ATP = L-histidyl-tRNA(His) + AMP + diphosphate + H(+). The polypeptide is Histidine--tRNA ligase (Pelotomaculum thermopropionicum (strain DSM 13744 / JCM 10971 / SI)).